Reading from the N-terminus, the 784-residue chain is Phosphate transporter PHO1 homolog 1 (784 aa).

At 1-387 the chain is on the cytoplasmic side; that stretch reads MVKFTKQFEG…HHRKESHSVT (387 aa). One can recognise an SPX domain in the interval 2-335; it reads VKFTKQFEGQ…GKQILPIYLK (334 aa). A helical membrane pass occupies residues 388-408; sequence FFIGLFTGCFVALLAGYIIVA. The Extracellular segment spans residues 409–429; it reads HLTGMYRQHSANTFYMETAYP. Residues 430–450 traverse the membrane as a helical segment; the sequence is VLSMFGLLFLHLFLYGCNIFM. Residues 451–474 are Cytoplasmic-facing; the sequence is WRKARINYSFIFELGSKNELKYRD. The helical transmembrane segment at 475–495 threads the bilayer; the sequence is VFLICTASMSAIAGVMFVHLS. Residues 496 to 507 are Extracellular-facing; sequence LLEKGYSFRQVQ. The chain crosses the membrane as a helical span at residues 508–528; sequence VIPGLLLLGFLLILICPLNIF. At 529–654 the chain is on the cytoplasmic side; that stretch reads YKSSRYRLIS…TKVAYEKERS (126 aa). The EXS domain maps to 593–784; it reads MRVKYYRDLA…LPFREVDEED (192 aa). Residues 655-675 traverse the membrane as a helical segment; the sequence is LGWLCLVVAMSSVATIYQLYW. Topologically, residues 676 to 703 are extracellular; that stretch reads DFVKDWGLLQHNSNNPWLRNQLMLRQKS. Residues 704 to 724 traverse the membrane as a helical segment; sequence IYYFSMVLNLVLRLAWLQTVL. Topologically, residues 725–784 are cytoplasmic; sequence HSSFEHVDYRVTGLFLAALEVIRRGQWNFYRLENEHLNNAGKFRAVKTVPLPFREVDEED.

Belongs to the SYG1 (TC 2.A.94) family. In terms of tissue distribution, expressed in vascular cylinder of roots, leaves, stems, petals, sepals and filaments. Expressed in receptacle, stigma apex and anther connective tissue.

Its subcellular location is the cell membrane. Functionally, contributes to the loading of inorganic phosphate (Pi) into the root xylem vessels. The protein is Phosphate transporter PHO1 homolog 1 (PHO1-H1) of Arabidopsis thaliana (Mouse-ear cress).